The primary structure comprises 239 residues: Uridylate kinase (239 aa).

10–13 (KLSG) provides a ligand contact to ATP. Gly53 provides a ligand contact to UMP. ATP-binding residues include Gly54 and Arg58. Residues Asp73 and 135-142 (TGRPYFTT) contribute to the UMP site. The ATP site is built by Asn163, Tyr169, and Asp172.

It belongs to the UMP kinase family. In terms of assembly, homohexamer.

The protein localises to the cytoplasm. It carries out the reaction UMP + ATP = UDP + ADP. It participates in pyrimidine metabolism; CTP biosynthesis via de novo pathway; UDP from UMP (UMPK route): step 1/1. Inhibited by UTP. Its function is as follows. Catalyzes the reversible phosphorylation of UMP to UDP. The polypeptide is Uridylate kinase (Mycoplasmopsis synoviae (strain 53) (Mycoplasma synoviae)).